Reading from the N-terminus, the 442-residue chain is MKKVFIRTFGCQMNEYDSEKMLSVLAEEHGGIEQVTQADEADIILFNTCSVREKAQEKVFSDLGRVRPLKEKNPGLIIGVAGCVASQEGENIIKRAPYVDVVFGPQTLHRLPKMIVDKETSGLSQVDISFPEIEKFDHLPPARVEGGAAFVSIMEGCSKYCSFCVVPYTRGEEFSRPLNDVLTEIANLAQQGVKEINLLGQNVNAYRGEMDDGEICDFATLLRIVHEIPGIERMRFTTSHPREFTDSIIECYRDLPKLVSHLHLPIQSGSDRVLSAMKRGYTALEYKSIIRKLRAIRPDLCLSSDFIVGFPGETEREFEQTLKLVKDIAFDLSFVFIYSPRPGTPAANLPDDTPHEEKVRRLEALNEVIEAETARINQTMIGTVQRCLVEGISKKDPDQLQARTANNRVVNFTGTPDMINQMIDLEITEAYTFSLRGKIVEA.

The MTTase N-terminal domain maps to 2-120 (KKVFIRTFGC…LPKMIVDKET (119 aa)). The [4Fe-4S] cluster site is built by cysteine 11, cysteine 49, cysteine 83, cysteine 157, cysteine 161, and cysteine 164. The Radical SAM core domain occupies 143 to 375 (RVEGGAAFVS…NEVIEAETAR (233 aa)). The TRAM domain maps to 378–441 (QTMIGTVQRC…TFSLRGKIVE (64 aa)).

This sequence belongs to the methylthiotransferase family. MiaB subfamily. In terms of assembly, monomer. The cofactor is [4Fe-4S] cluster.

The protein resides in the cytoplasm. The catalysed reaction is N(6)-dimethylallyladenosine(37) in tRNA + (sulfur carrier)-SH + AH2 + 2 S-adenosyl-L-methionine = 2-methylsulfanyl-N(6)-dimethylallyladenosine(37) in tRNA + (sulfur carrier)-H + 5'-deoxyadenosine + L-methionine + A + S-adenosyl-L-homocysteine + 2 H(+). Its function is as follows. Catalyzes the methylthiolation of N6-(dimethylallyl)adenosine (i(6)A), leading to the formation of 2-methylthio-N6-(dimethylallyl)adenosine (ms(2)i(6)A) at position 37 in tRNAs that read codons beginning with uridine. The protein is tRNA-2-methylthio-N(6)-dimethylallyladenosine synthase of Neisseria gonorrhoeae (strain NCCP11945).